Here is a 282-residue protein sequence, read N- to C-terminus: Acetyl-coenzyme A carboxylase carboxyl transferase subunit beta (282 aa).

A CoA carboxyltransferase N-terminal domain is found at 25-282 (VWRKCPHCNE…SQMLRIFMKQ (258 aa)). Zn(2+) is bound by residues Cys29, Cys32, Cys48, and Cys51. The segment at 29 to 51 (CPHCNEIIYAKEIERNLNVCPKC) adopts a C4-type zinc-finger fold.

This sequence belongs to the AccD/PCCB family. As to quaternary structure, acetyl-CoA carboxylase is a heterohexamer composed of biotin carboxyl carrier protein (AccB), biotin carboxylase (AccC) and two subunits each of ACCase subunit alpha (AccA) and ACCase subunit beta (AccD). Zn(2+) serves as cofactor.

It localises to the cytoplasm. The catalysed reaction is N(6)-carboxybiotinyl-L-lysyl-[protein] + acetyl-CoA = N(6)-biotinyl-L-lysyl-[protein] + malonyl-CoA. It participates in lipid metabolism; malonyl-CoA biosynthesis; malonyl-CoA from acetyl-CoA: step 1/1. Component of the acetyl coenzyme A carboxylase (ACC) complex. Biotin carboxylase (BC) catalyzes the carboxylation of biotin on its carrier protein (BCCP) and then the CO(2) group is transferred by the transcarboxylase to acetyl-CoA to form malonyl-CoA. This Syntrophotalea carbinolica (strain DSM 2380 / NBRC 103641 / GraBd1) (Pelobacter carbinolicus) protein is Acetyl-coenzyme A carboxylase carboxyl transferase subunit beta.